A 300-amino-acid chain; its full sequence is Inositol polyphosphate multikinase beta (300 aa).

Position 78 is a phosphoserine (serine 78).

It belongs to the inositol phosphokinase (IPK) family. Interacts with KIN10 and KIN11. Phosphorylated by KIN10. In terms of tissue distribution, expressed in leaves, stems, roots, siliques and flowers. Detected in vascular strands, stigma cells, the abscission zones of fully elongated siliques, the root central cylinder and the root tip.

The protein localises to the nucleus. The enzyme catalyses 1D-myo-inositol 1,4,5-trisphosphate + 2 ATP = 1D-myo-inositol 1,3,4,5,6-pentakisphosphate + 2 ADP + 2 H(+). It carries out the reaction 1D-myo-inositol 1,3,4,6-tetrakisphosphate + ATP = 1D-myo-inositol 1,3,4,5,6-pentakisphosphate + ADP + H(+). Down-regulated by KIN10 through its protein phosphorylation. Its function is as follows. Inositol phosphate kinase with a broad substrate specificity. Phosphorylates inositol 1,4,5-trisphosphate (Ins(1,4,5)P3), inositol 1,4,5,6-tetrakisphosphate (Ins(1,4,5,6)P4), inositol 1,3,4,5-tetrakisphosphate (Ins(1,3,4,5)P4), inositol 1,3,4,6-tetrakisphosphate (Ins(1,3,4,6)P4) and inositol 1,2,3,4,6-pentakisphosphate (Ins(1,2,3,4,6)P5) but not inositol 1,4-bisphosphate (Ins(1,4)P2), inositol 1,3,4-trisphosphate (Ins(1,3,4)P3), inositol 1,2,6-trisphosphate (Ins(1,2,6)P3), inositol 3,4,5,6-tetrakisphosphate (Ins(3,4,5,6)P4), inositol 1,3,4,5,6-pentakisphosphate (Ins(1,3,4,5,6)P5), inositol 1,2,4,5,6-pentakisphosphate (Ins(1,2,4,5,6)P5) or inositol hexakisphosphate (InsP6). Involved in the auxin signaling pathway. Regulates axillary shoot branching and is required for phytate synthesis in seeds. The protein is Inositol polyphosphate multikinase beta (IPK2b) of Arabidopsis thaliana (Mouse-ear cress).